The primary structure comprises 181 residues: Der GTPase-activating protein YihI (181 aa).

2 disordered regions span residues 1–75 and 145–181; these read MSRK…KKIP and EPEA…DYKG. Over residues 32–43 the composition is skewed to basic residues; sequence RLRKKDKKRKGL. The span at 146–155 shows a compositional bias: acidic residues; sequence PEAEEEFEEE. Residues 156–165 are compositionally biased toward basic and acidic residues; it reads APVRKSRSDD. Acidic residues predominate over residues 166–181; sequence DLLADFEDFDMDDYKG.

This sequence belongs to the YihI family. Interacts with Der.

In terms of biological role, a GTPase-activating protein (GAP) that modifies Der/EngA GTPase function. May play a role in ribosome biogenesis. The sequence is that of Der GTPase-activating protein YihI from Vibrio vulnificus (strain CMCP6).